A 61-amino-acid chain; its full sequence is Photosystem II reaction center protein Z (61 aa).

2 consecutive transmembrane segments (helical) span residues 5–25 and 38–58; these read LTALLVLISLALVVTVPVALA and NKAFQLWVGLVVAIATADGIS.

Belongs to the PsbZ family. As to quaternary structure, PSII is composed of 1 copy each of membrane proteins PsbA, PsbB, PsbC, PsbD, PsbE, PsbF, PsbH, PsbI, PsbJ, PsbK, PsbL, PsbM, PsbT, PsbX, PsbY, PsbZ, Psb30/Ycf12, at least 3 peripheral proteins of the oxygen-evolving complex and a large number of cofactors. It forms dimeric complexes.

Its subcellular location is the plastid. The protein localises to the chloroplast thylakoid membrane. In terms of biological role, may control the interaction of photosystem II (PSII) cores with the light-harvesting antenna, regulates electron flow through the 2 photosystem reaction centers. PSII is a light-driven water plastoquinone oxidoreductase, using light energy to abstract electrons from H(2)O, generating a proton gradient subsequently used for ATP formation. In Skeletonema costatum (Marine centric diatom), this protein is Photosystem II reaction center protein Z.